Reading from the N-terminus, the 617-residue chain is MLDWQNGQLYSTRFGDVYFSRDSGLEEKQYVFLQGNRLADRFESLQPDTAFSIGETGFGTGLSFLCTWRLFIQIAPLRTSLDFFSVEKYPLDEKELSAALALWPELGPYADELMLRWQRRVPGWNRWSFAGGRVRLTLAIEDVTRALPETHGIDAWFLDGFSPARNPEMWTLQIFHWIARASRAGATFATYTSAGVVRRGLEQAGFQVKKISGFGHKREMLQGDLPGPPPVRLAPTTAIVIGGGIAGCAAASALASRGLIVELLESHTLGAGASGNPIGILHARLSAGMNALHRFVLASYGHALALLDEKIPVDGVMRSECGELQLSFSAEEARRIGKLATLDWPAHVFRPVDAAEASALAGIELSYGGLWFPGSGWLAPPQLCVALLGSQAITLYTGRTVKSLTPTSHGWRVQAEDQRKQAWSLEAEIVVVCTGYQVKSLPALANLPLTPVRGQLTLIPATTASQNLRTIVCGSGYFSPAVAGRHMVGATHRFNDTSINLNVSEHAENLSRLREISPVLRRLSDEVSQDIRQLEQLDGRTSIRGSVPGAMPLVGELLPGLYTSLGHGTRGLITAGISAELVAATACGQLLPLPLSVVNALSPVRRASPAIPVSIKG.

The interval 1-226 (MLDWQNGQLY…KREMLQGDLP (226 aa)) is tRNA (mnm(5)s(2)U34)-methyltransferase. Residues 241–617 (IGGGIAGCAA…SPAIPVSIKG (377 aa)) form an FAD-dependent cmnm(5)s(2)U34 oxidoreductase region.

In the N-terminal section; belongs to the methyltransferase superfamily. tRNA (mnm(5)s(2)U34)-methyltransferase family. It in the C-terminal section; belongs to the DAO family. FAD is required as a cofactor.

Its subcellular location is the cytoplasm. The catalysed reaction is 5-aminomethyl-2-thiouridine(34) in tRNA + S-adenosyl-L-methionine = 5-methylaminomethyl-2-thiouridine(34) in tRNA + S-adenosyl-L-homocysteine + H(+). Functionally, catalyzes the last two steps in the biosynthesis of 5-methylaminomethyl-2-thiouridine (mnm(5)s(2)U) at the wobble position (U34) in tRNA. Catalyzes the FAD-dependent demodification of cmnm(5)s(2)U34 to nm(5)s(2)U34, followed by the transfer of a methyl group from S-adenosyl-L-methionine to nm(5)s(2)U34, to form mnm(5)s(2)U34. In Nitrosospira multiformis (strain ATCC 25196 / NCIMB 11849 / C 71), this protein is tRNA 5-methylaminomethyl-2-thiouridine biosynthesis bifunctional protein MnmC.